The following is a 373-amino-acid chain: MSDNSKIRVVVGMSGGVDSSVTALLLKEQGYDVIGVFMKNWDDTDEFGVCTATEDYKDVAAVADQIGIPYYSVNFEKEYWDRVFEYFLSEYKAGRTPNPDVMCNKEIKFKAFLDYAMTLGADYVATGHYAQVRRDEDGIVHMLRGVDNGKDQTYFLSQLSQEQLQKTMFPLGHLQKSEVREIAERAGLATAKKKDSTGICFIGEKNFKQFLSQYLPAQKGRMMTVDGRDMGEHAGLMYYTIGQRGGLGIGGQHGGDNQPWFVVGKDLSKNILYVGQGFYHESLMSTSLQASVIHFTRDMPSEFTLECTAKFRYRQPDSKVTVYVKGEHAEVVFDEPQRAITPGQAVVFYDAEECLGGGIIDMAFKDGVACQYI.

Residues 12–19 and M38 each bind ATP; that span reads GMSGGVDS. Residues 98-100 are interaction with target base in tRNA; sequence NPD. C103 serves as the catalytic Nucleophile. C103 and C200 are disulfide-bonded. G127 contributes to the ATP binding site. The interval 150–152 is interaction with tRNA; that stretch reads KDQ. The active-site Cysteine persulfide intermediate is the C200. Positions 312 to 313 are interaction with tRNA; the sequence is RY.

This sequence belongs to the MnmA/TRMU family.

The protein resides in the cytoplasm. The enzyme catalyses S-sulfanyl-L-cysteinyl-[protein] + uridine(34) in tRNA + AH2 + ATP = 2-thiouridine(34) in tRNA + L-cysteinyl-[protein] + A + AMP + diphosphate + H(+). Functionally, catalyzes the 2-thiolation of uridine at the wobble position (U34) of tRNA, leading to the formation of s(2)U34. The polypeptide is tRNA-specific 2-thiouridylase MnmA (Streptococcus uberis (strain ATCC BAA-854 / 0140J)).